A 280-amino-acid chain; its full sequence is Transmembrane protein 119 (280 aa).

A signal peptide spans 1–20 (MVPWFLLSLLLLARPVPGVA). Over 21-91 (YSVSLPASFL…IMDFFRQYVM (71 aa)) the chain is Extracellular. O-linked (Xyl...) (chondroitin sulfate) serine glycosylation is present at Ser36. Over residues 38–47 (EAEGSSASSP) the composition is skewed to low complexity. The interval 38–73 (EAEGSSASSPSLPPPGTPAFSPTPERPQPTALDGPV) is disordered. The chain crosses the membrane as a helical span at residues 92-112 (LIAVVGSLTFLIMFIVCAALI). The Cytoplasmic segment spans residues 113-280 (TRQKHKATAY…CACNRVSPSV (168 aa)). 2 disordered regions span residues 133 to 162 (VDQR…EGLD) and 181 to 280 (PARA…SPSV). Positions 148–162 (VPDRAPDSRHEEGLD) are enriched in basic and acidic residues. Ser269 carries the phosphoserine modification.

As to quaternary structure, interacts with SMAD1, SMAD5 and RUNX2. In terms of tissue distribution, expressed in spermatocytes and spermatids in the developing testis (at protein level). Expressed in the brain, heart, lung, spleen, skeletal muscle, ovary, testis and epididymis. Predominantly expressed in osteoblasts.

Its subcellular location is the cell membrane. The protein localises to the cytoplasm. The protein resides in the endoplasmic reticulum membrane. It is found in the secreted. Plays an important role in bone formation and normal bone mineralization. Promotes the differentiation of myoblasts into osteoblasts. May induce the commitment and differentiation of myoblasts into osteoblasts through an enhancement of BMP2 production and interaction with the BMP-RUNX2 pathway. Up-regulates the expression of ATF4 which plays a central role in osteoblast differentiation. Essential for normal spermatogenesis and late testicular differentiation. The polypeptide is Transmembrane protein 119 (Tmem119) (Mus musculus (Mouse)).